The primary structure comprises 104 residues: Glutaredoxin-C15 (104 aa).

In terms of domain architecture, Glutaredoxin spans 1 to 103; it reads MERVAKLSTE…PMLKAAGAIW (103 aa). Cysteines 21 and 24 form a disulfide.

This sequence belongs to the glutaredoxin family. CC-type subfamily.

The protein localises to the cytoplasm. Functionally, has a glutathione-disulfide oxidoreductase activity in the presence of NADPH and glutathione reductase. Reduces low molecular weight disulfides and proteins. The chain is Glutaredoxin-C15 (GRXC15) from Oryza sativa subsp. japonica (Rice).